A 75-amino-acid chain; its full sequence is Small ribosomal subunit protein bS18c (75 aa).

This sequence belongs to the bacterial ribosomal protein bS18 family. In terms of assembly, part of the 30S ribosomal subunit.

The protein localises to the plastid. It is found in the chloroplast. This chain is Small ribosomal subunit protein bS18c, found in Angiopteris evecta (Mule's foot fern).